Here is a 447-residue protein sequence, read N- to C-terminus: ATP-dependent protease ATPase subunit HslU (447 aa).

Residues Ile17, 59–64 (GVGKTE), Asp256, Glu321, and Arg393 each bind ATP.

This sequence belongs to the ClpX chaperone family. HslU subfamily. In terms of assembly, a double ring-shaped homohexamer of HslV is capped on each side by a ring-shaped HslU homohexamer. The assembly of the HslU/HslV complex is dependent on binding of ATP.

Its subcellular location is the cytoplasm. ATPase subunit of a proteasome-like degradation complex; this subunit has chaperone activity. The binding of ATP and its subsequent hydrolysis by HslU are essential for unfolding of protein substrates subsequently hydrolyzed by HslV. HslU recognizes the N-terminal part of its protein substrates and unfolds these before they are guided to HslV for hydrolysis. In Pseudomonas entomophila (strain L48), this protein is ATP-dependent protease ATPase subunit HslU.